We begin with the raw amino-acid sequence, 190 residues long: Syndecan-2-B (190 aa).

An N-terminal signal peptide occupies residues 1–22; sequence MRNVWLIVPFALLAAFSGETWA. The Extracellular portion of the chain corresponds to 23–136; the sequence is QADRDLYIDS…NLFHRTEVLA (114 aa). Residues 34–60 form a disordered region; the sequence is ESSGNYPVDDDDYSSGSGSGIPAHDDD. 4 O-linked (Xyl...) (glycosaminoglycan) serine glycosylation sites follow: Ser36, Ser48, Ser50, and Ser52. A helical transmembrane segment spans residues 137 to 157; that stretch reads AVIAGGGIGFLFAVFLILLLV. Residues 158–190 are Cytoplasmic-facing; that stretch reads YRMRKKDEGSYDLGERKPSSAVYQKAPTKEFYA. The tract at residues 167–190 is disordered; sequence SYDLGERKPSSAVYQKAPTKEFYA.

This sequence belongs to the syndecan proteoglycan family. In terms of processing, O-glycosylated; contains both heparan sulfate and chondroitin sulfate.

The protein resides in the membrane. Its function is as follows. Cell surface proteoglycan. The polypeptide is Syndecan-2-B (sdc2-b) (Xenopus laevis (African clawed frog)).